Consider the following 303-residue polypeptide: uncharacterized protein (303 aa).

Disordered stretches follow at residues 1–89 and 132–159; these read MTSP…NVRS and SELP…STPR. Residues 61–89 show a composition bias toward polar residues; that stretch reads RASQSGYRPSDPLTTTRQSNPAPGANVRS. Helical transmembrane passes span 205 to 225 and 264 to 284; these read LLLS…LYLL and VLVG…AAFV.

This sequence to M.tuberculosis Rv0007.

It is found in the cell membrane. This is an uncharacterized protein from Mycobacterium leprae (strain TN).